Consider the following 142-residue polypeptide: Multiprotein-bridging factor 1a (142 aa).

The span at 51–64 (GTNKAASSGTSLNT) shows a compositional bias: polar residues. A disordered region spans residues 51–77 (GTNKAASSGTSLNTKMLDDDTENLTHE). Residues 87-141 (IMQARTDKKLTQSQLAQIINEKPQVIQEYESGKAIPNQQILSKLERALGAKLRGK) enclose the HTH cro/C1-type domain. The H-T-H motif DNA-binding region spans 98–117 (QSQLAQIINEKPQVIQEYES).

The protein belongs to the MBF1 family. In terms of tissue distribution, expressed in leaves, roots, stems, flowers, siliques and shoots. Detected only in anthers and some seeds in siliques.

It is found in the nucleus. The protein localises to the nucleolus. In terms of biological role, transcriptional coactivator that stimulates transcriptional activity by bridging regulatory proteins and TBP, thereby recruiting TBP to promoters occupied by DNA-binding regulators. The chain is Multiprotein-bridging factor 1a (MBF1A) from Arabidopsis thaliana (Mouse-ear cress).